The sequence spans 249 residues: dTDP-4-amino-2,3,4,6-tetradeoxy-D-glucose N,N-dimethyltransferase (249 aa).

Arg-30 provides a ligand contact to substrate. S-adenosyl-L-methionine contacts are provided by residues Ala-59, Glu-80, and 102 to 103 (DI). Substrate is bound by residues Thr-165, 178–182 (RLSHS), and Arg-241.

This sequence belongs to the methyltransferase TylM1/DesVI family. As to quaternary structure, homodimer. It depends on Mg(2+) as a cofactor.

The enzyme catalyses dTDP-4-amino-2,3,4,6-tetradeoxy-alpha-D-erythro-hexopyranose + 2 S-adenosyl-L-methionine = dTDP-alpha-D-forosamine + 2 S-adenosyl-L-homocysteine + 2 H(+). Its function is as follows. Involved in the biosynthesis of forosamine ((4-dimethylamino)-2,3,4,6-tetradeoxy-alpha-D-threo-hexopyranose), a highly deoxygenated sugar component of several bioactive natural products such as the insecticidal spinosyns A and D. Catalyzes the dimethylation of the C-4 amino group from dTDP-4-amino-2,3,4,6-tetradeoxy-alpha-D-glucose to yield dTDP-D-forosamine. In Saccharopolyspora spinosa, this protein is dTDP-4-amino-2,3,4,6-tetradeoxy-D-glucose N,N-dimethyltransferase.